The sequence spans 53 residues: MSLLLLTDVDLLINLILLFQKKLSLKEAIVFSLAVFGIVEAYYYWKNRSSESE.

Residues 28-45 (AIVFSLAVFGIVEAYYYW) form a helical membrane-spanning segment.

The protein localises to the host membrane. This is an uncharacterized protein from Acidianus convivator (ABV).